The following is a 1014-amino-acid chain: Ephrin type-B receptor 6 (1014 aa).

The N-terminal stretch at 1 to 32 (MATEGTTGSGSRVVAGMVCSLWLLVLGSSVLA) is a signal peptide. The Extracellular portion of the chain corresponds to 33-591 (LEEVLLDTTG…LPEKLSLVIG (559 aa)). The 199-residue stretch at 34 to 232 (EEVLLDTTGE…FSYTCPSVLR (199 aa)) folds into the Eph LBD domain. Fibronectin type-III domains are found at residues 364–479 (PPSA…TSHE) and 480–575 (VPSA…TLPQ). Residue Asn473 is glycosylated (N-linked (GlcNAc...) asparagine). The chain crosses the membrane as a helical span at residues 592–612 (SILGALAFLLLAAITVLAVIF). The Cytoplasmic segment spans residues 613 to 1014 (QRKRRGTGYT…HLRQPGSVEV (402 aa)). The Protein kinase domain maps to 663–912 (IKIEEVIGAG…QLVAAFDKMI (250 aa)). 669 to 677 (IGAGSFGEV) is an ATP binding site. Residues 941 to 1005 (PCLDSPQAWL…LHNIQLLQQH (65 aa)) form the SAM domain. The PDZ-binding motif lies at 1012–1014 (VEV).

The protein belongs to the protein kinase superfamily. Tyr protein kinase family. Ephrin receptor subfamily. In terms of assembly, interacts with CBL and EPHB1. Interacts with FYN; this interaction takes place in a ligand-independent manner. In terms of processing, ligand-binding increases phosphorylation on tyrosine residues. Phosphorylation on tyrosine residues is mediated by transphosphorylation by the catalytically active EPHB1 in a ligand-independent manner. Tyrosine phosphorylation of the receptor may act as a switch on the functional transition from cell adhesion/attraction to de-adhesion/repulsion. In terms of tissue distribution, high level in thymus, and brain. Very low levels of expression in kidney, lung, liver, bone marrow, skeletal muscle, spleen from 2 week old and adult mice, heart, testes and embryonic stem cells.

The protein resides in the cell membrane. It is found in the secreted. Kinase-defective receptor for members of the ephrin-B family. Binds to ephrin-B1 and ephrin-B2. Modulates cell adhesion and migration by exerting both positive and negative effects upon stimulation with ephrin-B2. Inhibits JNK activation, T-cell receptor-induced IL-2 secretion and CD25 expression upon stimulation with ephrin-B2. The polypeptide is Ephrin type-B receptor 6 (Ephb6) (Mus musculus (Mouse)).